The following is a 159-amino-acid chain: Phosphopantetheine adenylyltransferase (159 aa).

Serine 9 provides a ligand contact to substrate. ATP-binding positions include 9-10 (SF) and histidine 17. Positions 41, 73, and 87 each coordinate substrate. ATP contacts are provided by residues 88–90 (GLR), glutamate 98, and 122–128 (YSFLSSS).

This sequence belongs to the bacterial CoaD family. In terms of assembly, homohexamer. Mg(2+) is required as a cofactor.

Its subcellular location is the cytoplasm. It catalyses the reaction (R)-4'-phosphopantetheine + ATP + H(+) = 3'-dephospho-CoA + diphosphate. Its pathway is cofactor biosynthesis; coenzyme A biosynthesis; CoA from (R)-pantothenate: step 4/5. Functionally, reversibly transfers an adenylyl group from ATP to 4'-phosphopantetheine, yielding dephospho-CoA (dPCoA) and pyrophosphate. This Streptomyces avermitilis (strain ATCC 31267 / DSM 46492 / JCM 5070 / NBRC 14893 / NCIMB 12804 / NRRL 8165 / MA-4680) protein is Phosphopantetheine adenylyltransferase.